A 335-amino-acid chain; its full sequence is Probable cytosolic iron-sulfur protein assembly protein Ciao1 (335 aa).

7 WD repeats span residues 12 to 51 (GHKGRIWGVAWHPKGNVFASCGEDKAIRIWSLTGNTWSTK), 57 to 96 (GHKRTIREIRWSPCGQYLASASFDATTAIWSKSSGEFECN), 101 to 140 (GHENEVKSVSWSRSGGLLATCSRDKSVWIWEVAGDDEFEC), 146 to 185 (PHTQDVKRVVWHPTKDILASASYDNTIKMFAEEPIDNDWD), 192 to 231 (SHTSTVWGIDFDADGERLVSCSDDTTIKIWRAYHPGNTAG), 250 to 289 (QHSRAIYDVSWCKLTGLIATACGDDGIRIFKESSDSKPDE), and 301 to 335 (AHDQDVNSVQWNPVVAGQLISCSDDGTIKIWKVTE).

This sequence belongs to the WD repeat CIA1 family. Post-translationally, conjugated to URM1, a ubiquitin-like protein.

Essential component of the cytosolic iron-sulfur (Fe/S) protein assembly machinery. Required for the maturation of extramitochondrial Fe/S proteins. The sequence is that of Probable cytosolic iron-sulfur protein assembly protein Ciao1 from Drosophila melanogaster (Fruit fly).